The primary structure comprises 39 residues: U-limacoditoxin(13)-As54 (39 aa).

The first 23 residues, 1–23 (MSKYIVLLVVSAIALLQFSMIEC), serve as a signal peptide directing secretion. Position 37 is a phenylalanine amide (F37).

This sequence belongs to the FARP (FMRFamide related peptide) family. Expressed by the venom secretory cell of the spine. The spine is a cuticular structure containing a single large nucleated venom-secreting cell at its base. It is an independent unit capable of producing, storing and injecting venom. On the back of A.stimulea caterpillars, spines are grouped together by 50 to 100 to form scoli, of which there are eight.

It is found in the secreted. Strongly activates (at 30 uM) the human neuropeptide FF receptor 1 (NPFF1R), a G-protein coupled receptor, with an effect that is equipotent to the endogenous RFRP-1 ligand in activating NPFFR1. Is toxic when injected into Drosophila melanogaster. Also shows a moderate anthelmintic activity against the parasitic nematode H.contortus (drug susceptible Kirby isolate) (IC(50)=20.1 uM). The protein is U-limacoditoxin(13)-As54 of Acharia stimulea (Saddleback caterpillar moth).